Here is a 491-residue protein sequence, read N- to C-terminus: UDP-N-acetylmuramate--L-alanine ligase (491 aa).

ATP is bound at residue 126-132; it reads GTHGKTT.

The protein belongs to the MurCDEF family.

Its subcellular location is the cytoplasm. The catalysed reaction is UDP-N-acetyl-alpha-D-muramate + L-alanine + ATP = UDP-N-acetyl-alpha-D-muramoyl-L-alanine + ADP + phosphate + H(+). Its pathway is cell wall biogenesis; peptidoglycan biosynthesis. Cell wall formation. The polypeptide is UDP-N-acetylmuramate--L-alanine ligase (Yersinia enterocolitica serotype O:8 / biotype 1B (strain NCTC 13174 / 8081)).